Reading from the N-terminus, the 62-residue chain is UPF0339 protein Atu0232 (62 aa).

It belongs to the UPF0339 family.

In Agrobacterium fabrum (strain C58 / ATCC 33970) (Agrobacterium tumefaciens (strain C58)), this protein is UPF0339 protein Atu0232.